A 494-amino-acid chain; its full sequence is tRNA-2-methylthio-N(6)-dimethylallyladenosine synthase (494 aa).

In terms of domain architecture, MTTase N-terminal spans 12 to 131; it reads PTYRVVTYGC…LPVLLKRARH (120 aa). [4Fe-4S] cluster contacts are provided by cysteine 21, cysteine 60, cysteine 94, cysteine 168, cysteine 172, and cysteine 175. The region spanning 154 to 385 is the Radical SAM core domain; sequence RDSAYSAWVS…ELVDDIAWQE (232 aa). One can recognise a TRAM domain in the interval 387-457; sequence KAQVGRAVEV…PHHLVADGGL (71 aa).

Belongs to the methylthiotransferase family. MiaB subfamily. In terms of assembly, monomer. The cofactor is [4Fe-4S] cluster.

Its subcellular location is the cytoplasm. It carries out the reaction N(6)-dimethylallyladenosine(37) in tRNA + (sulfur carrier)-SH + AH2 + 2 S-adenosyl-L-methionine = 2-methylsulfanyl-N(6)-dimethylallyladenosine(37) in tRNA + (sulfur carrier)-H + 5'-deoxyadenosine + L-methionine + A + S-adenosyl-L-homocysteine + 2 H(+). Functionally, catalyzes the methylthiolation of N6-(dimethylallyl)adenosine (i(6)A), leading to the formation of 2-methylthio-N6-(dimethylallyl)adenosine (ms(2)i(6)A) at position 37 in tRNAs that read codons beginning with uridine. This chain is tRNA-2-methylthio-N(6)-dimethylallyladenosine synthase, found in Cutibacterium acnes (strain DSM 16379 / KPA171202) (Propionibacterium acnes).